Here is a 262-residue protein sequence, read N- to C-terminus: ATP synthase subunit a (262 aa).

The next 6 membrane-spanning stretches (helical) occupy residues 24–44 (AVHL…LFVF), 84–104 (VIAP…AIDL), 129–149 (DISA…FYTV), 165–185 (PFNH…TLLA), 194–214 (LFGN…MYMA), and 228–248 (LVWA…FMML).

The protein belongs to the ATPase A chain family. As to quaternary structure, F-type ATPases have 2 components, CF(1) - the catalytic core - and CF(0) - the membrane proton channel. CF(1) has five subunits: alpha(3), beta(3), gamma(1), delta(1), epsilon(1). CF(0) has three main subunits: a(1), b(2) and c(9-12). The alpha and beta chains form an alternating ring which encloses part of the gamma chain. CF(1) is attached to CF(0) by a central stalk formed by the gamma and epsilon chains, while a peripheral stalk is formed by the delta and b chains.

The protein localises to the cell inner membrane. Its function is as follows. Key component of the proton channel; it plays a direct role in the translocation of protons across the membrane. In Actinobacillus pleuropneumoniae serotype 7 (strain AP76), this protein is ATP synthase subunit a.